The primary structure comprises 193 residues: Thymidine kinase (193 aa).

ATP contacts are provided by residues Gly16–Ser23 and Asp89–Gln92. Catalysis depends on Glu90, which acts as the Proton acceptor. Residues Cys146, Cys149, Cys184, and Cys187 each coordinate Zn(2+).

The protein belongs to the thymidine kinase family. In terms of assembly, homotetramer.

It localises to the cytoplasm. The catalysed reaction is thymidine + ATP = dTMP + ADP + H(+). The polypeptide is Thymidine kinase (Thermoanaerobacter pseudethanolicus (strain ATCC 33223 / 39E) (Clostridium thermohydrosulfuricum)).